The sequence spans 246 residues: 1-(5-phosphoribosyl)-5-[(5-phosphoribosylamino)methylideneamino] imidazole-4-carboxamide isomerase (246 aa).

Catalysis depends on D10, which acts as the Proton acceptor. D135 (proton donor) is an active-site residue.

It belongs to the HisA/HisF family.

Its subcellular location is the cytoplasm. The enzyme catalyses 1-(5-phospho-beta-D-ribosyl)-5-[(5-phospho-beta-D-ribosylamino)methylideneamino]imidazole-4-carboxamide = 5-[(5-phospho-1-deoxy-D-ribulos-1-ylimino)methylamino]-1-(5-phospho-beta-D-ribosyl)imidazole-4-carboxamide. Its pathway is amino-acid biosynthesis; L-histidine biosynthesis; L-histidine from 5-phospho-alpha-D-ribose 1-diphosphate: step 4/9. The sequence is that of 1-(5-phosphoribosyl)-5-[(5-phosphoribosylamino)methylideneamino] imidazole-4-carboxamide isomerase from Methanococcoides burtonii (strain DSM 6242 / NBRC 107633 / OCM 468 / ACE-M).